The following is a 185-amino-acid chain: Large ribosomal subunit protein bL25 (185 aa).

It belongs to the bacterial ribosomal protein bL25 family. CTC subfamily. As to quaternary structure, part of the 50S ribosomal subunit; part of the 5S rRNA/L5/L18/L25 subcomplex. Contacts the 5S rRNA. Binds to the 5S rRNA independently of L5 and L18.

This is one of the proteins that binds to the 5S RNA in the ribosome where it forms part of the central protuberance. This Chlamydia pneumoniae (Chlamydophila pneumoniae) protein is Large ribosomal subunit protein bL25.